We begin with the raw amino-acid sequence, 495 residues long: NAD(+)--protein-arginine ADP-ribosyltransferase Tre1 (495 aa).

Residues 278–309 (PDLQIKGPTPVKKPEPLQPARQPEKASAPKPV) are disordered. A TR mART core domain is found at 315 to 495 (MSLREAVGNQ…VTQFILKEIP (181 aa)). The segment at 344 to 495 (RSALLTDDQI…VTQFILKEIP (152 aa)) is ART domain. Active-site residues include Arg-406, Ser-431, and Glu-466.

This sequence belongs to the Arg-specific ADP-ribosyltransferase family.

It localises to the secreted. The protein localises to the host cytoplasm. The catalysed reaction is L-arginyl-[protein] + NAD(+) = N(omega)-(ADP-D-ribosyl)-L-arginyl-[protein] + nicotinamide + H(+). Its function is as follows. Toxic component of a contact-dependent interbacterial competition system (also called effector-immunity systems). Acts by ADP-ribosylating a number of target proteins in target cells; E.coli target proteins include FtsZ, EFTu, RNase E, Fis, YegQ, GuaB and IF2. The protein is NAD(+)--protein-arginine ADP-ribosyltransferase Tre1 of Pseudomonas putida (strain GB-1).